The primary structure comprises 751 residues: Methionine--tRNA ligase, cytoplasmic (751 aa).

The residue at position 2 (serine 2) is an N-acetylserine. The interaction with ARC1 stretch occupies residues 36 to 92 (LKPEVDNDNAAMELRNTKEPFLLFDANAILRYVMDDFEGQTSDKYQFALASLQNLLY). Residues 205-215 (PYVNNVPHLGN) carry the 'HIGH' region motif. Residue lysine 411 coordinates ATP. Residues 525-529 (KFSKS) carry the 'KMSKS' region motif.

The protein belongs to the class-I aminoacyl-tRNA synthetase family. In terms of assembly, component of a yeast aminoacyl-tRNA synthase (aaRS) complex formed by methionyl-tRNA synthase MES1, glutamyl-tRNA synthase GUS1 and the tRNA aminoacylation cofactor ARC1 in a stoichiometric complex. Interacts (via N-ter) with ARC1 (via N-ter). Can also form a stable binary complex with ARC1 that is functional in terms of aminoacylation. ARC1 increases the affinity for cognate tRNAs due to the presence of a tRNA binding domain in the middle and C-terminal part of ARC1.

It localises to the cytoplasm. The catalysed reaction is tRNA(Met) + L-methionine + ATP = L-methionyl-tRNA(Met) + AMP + diphosphate. Catalyzes the attachment of methionine to tRNA(Met) in a two-step reaction: methionine is first activated by ATP to form Met-AMP and then transferred to the acceptor end of tRNA(Met). The polypeptide is Methionine--tRNA ligase, cytoplasmic (MES1) (Saccharomyces cerevisiae (strain ATCC 204508 / S288c) (Baker's yeast)).